The following is a 978-amino-acid chain: uncharacterized protein (978 aa).

The signal sequence occupies residues 1–27 (MHSWKKKLVVSQLALACTLAITSQANA). One can recognise an Autotransporter domain in the interval 713–978 (GLADNGGAWV…SANVGVKYTW (266 aa)).

This is an uncharacterized protein from Salmonella typhimurium (strain LT2 / SGSC1412 / ATCC 700720).